The chain runs to 332 residues: DNA-directed RNA polymerase subunit alpha (332 aa).

Residues 1 to 231 are alpha N-terminal domain (alpha-NTD); sequence MVREKVTVST…DLFIPFLHME (231 aa). The alpha C-terminal domain (alpha-CTD) stretch occupies residues 262–332; that stretch reads LSLESLFIDQ…FALDLPKNLN (71 aa).

This sequence belongs to the RNA polymerase alpha chain family. In plastids the minimal PEP RNA polymerase catalytic core is composed of four subunits: alpha, beta, beta', and beta''. When a (nuclear-encoded) sigma factor is associated with the core the holoenzyme is formed, which can initiate transcription.

The protein resides in the plastid. The catalysed reaction is RNA(n) + a ribonucleoside 5'-triphosphate = RNA(n+1) + diphosphate. Its function is as follows. DNA-dependent RNA polymerase catalyzes the transcription of DNA into RNA using the four ribonucleoside triphosphates as substrates. This chain is DNA-directed RNA polymerase subunit alpha, found in Cuscuta japonica (Japanese dodder).